We begin with the raw amino-acid sequence, 1193 residues long: Probable DNA-directed RNA polymerase II subunit RPB2 homolog (1193 aa).

Aspartate 808 is a Mg(2+) binding site. Zn(2+) contacts are provided by cysteine 1137, cysteine 1140, cysteine 1155, and cysteine 1158. The C4-type zinc-finger motif lies at 1137 to 1158 (CVPCKSYFKVVKTQNGFFCSGC).

This sequence belongs to the RNA polymerase beta chain family.

The enzyme catalyses RNA(n) + a ribonucleoside 5'-triphosphate = RNA(n+1) + diphosphate. Component of the DNA-dependent RNA polymerase that catalyzes the transcription of DNA into RNA using the four ribonucleoside triphosphates as substrates. Second largest component of RNA polymerase II which synthesizes mRNA precursors and many functional non-coding RNAs. Proposed to contribute to the polymerase catalytic activity and forms the polymerase active center together with the largest subunit. This is Probable DNA-directed RNA polymerase II subunit RPB2 homolog from Invertebrate iridescent virus 6 (IIV-6).